Reading from the N-terminus, the 269-residue chain is uncharacterized protein (269 aa).

The protein belongs to the methyltransferase superfamily.

This is an uncharacterized protein from Mycobacterium leprae (strain Br4923).